The following is a 200-amino-acid chain: Putative AgrB-like protein (200 aa).

A run of 5 helical transmembrane segments spans residues L49–M69, L88–T108, L114–V134, A148–S168, and L171–G191.

This sequence belongs to the AgrB family.

It localises to the cell membrane. May be involved in the proteolytic processing of a quorum sensing system signal molecule precursor. In Lactiplantibacillus plantarum (strain ATCC BAA-793 / NCIMB 8826 / WCFS1) (Lactobacillus plantarum), this protein is Putative AgrB-like protein.